Reading from the N-terminus, the 571-residue chain is Urease subunit alpha (571 aa).

The 439-residue stretch at 133 to 571 (GGIDTHIHFV…LPLAQRYFLF (439 aa)) folds into the Urease domain. Positions 138, 140, and 221 each coordinate Ni(2+). Residue K221 is modified to N6-carboxylysine. Position 223 (H223) interacts with substrate. H250 and H276 together coordinate Ni(2+). The active-site Proton donor is the H324. D364 serves as a coordination point for Ni(2+).

The protein belongs to the metallo-dependent hydrolases superfamily. Urease alpha subunit family. As to quaternary structure, heterotrimer of UreA (gamma), UreB (beta) and UreC (alpha) subunits. Three heterotrimers associate to form the active enzyme. It depends on Ni cation as a cofactor. In terms of processing, carboxylation allows a single lysine to coordinate two nickel ions.

It localises to the cytoplasm. The catalysed reaction is urea + 2 H2O + H(+) = hydrogencarbonate + 2 NH4(+). It functions in the pathway nitrogen metabolism; urea degradation; CO(2) and NH(3) from urea (urease route): step 1/1. In Anaeromyxobacter sp. (strain K), this protein is Urease subunit alpha.